The primary structure comprises 360 residues: Peptide chain release factor 1 (360 aa).

Gln-235 carries the N5-methylglutamine modification.

This sequence belongs to the prokaryotic/mitochondrial release factor family. Methylated by PrmC. Methylation increases the termination efficiency of RF1.

The protein resides in the cytoplasm. Its function is as follows. Peptide chain release factor 1 directs the termination of translation in response to the peptide chain termination codons UAG and UAA. In Bordetella parapertussis (strain 12822 / ATCC BAA-587 / NCTC 13253), this protein is Peptide chain release factor 1.